Reading from the N-terminus, the 882-residue chain is Valine--tRNA ligase (882 aa).

Positions 52–62 (PNVTGSLHMGH) match the 'HIGH' region motif. The 'KMSKS' region signature appears at 539–543 (KMSKS). K542 serves as a coordination point for ATP. Positions 816 to 882 (IDVAAERRRL…RINARLAVLQ (67 aa)) form a coiled coil.

Belongs to the class-I aminoacyl-tRNA synthetase family. ValS type 1 subfamily. Monomer.

It is found in the cytoplasm. It catalyses the reaction tRNA(Val) + L-valine + ATP = L-valyl-tRNA(Val) + AMP + diphosphate. In terms of biological role, catalyzes the attachment of valine to tRNA(Val). As ValRS can inadvertently accommodate and process structurally similar amino acids such as threonine, to avoid such errors, it has a 'posttransfer' editing activity that hydrolyzes mischarged Thr-tRNA(Val) in a tRNA-dependent manner. In Mycolicibacterium paratuberculosis (strain ATCC BAA-968 / K-10) (Mycobacterium paratuberculosis), this protein is Valine--tRNA ligase.